The sequence spans 167 residues: Ubiquitin-fold modifier-conjugating enzyme 1 (167 aa).

Residue C116 is the Glycyl thioester intermediate of the active site.

Belongs to the ubiquitin-conjugating enzyme family. UFC1 subfamily. Interacts with UBA5 (via C-terminus). Interacts with UFL1. Interacts with UFM1.

Its function is as follows. E2-like enzyme which specifically catalyzes the second step in ufmylation. Accepts the ubiquitin-like modifier UFM1 from the E1 enzyme UBA5 and forms an intermediate with UFM1 via a thioester linkage. Ufmylation is involved in various processes, such as ribosome recycling, response to DNA damage, interferon response or reticulophagy (also called ER-phagy). This chain is Ubiquitin-fold modifier-conjugating enzyme 1, found in Esox lucius (Northern pike).